We begin with the raw amino-acid sequence, 202 residues long: MRNVSMTERIIEVVRNTNETKIRVRLNLDGSGQGTLNTGVPFLDHMIDQIKRHGLFDIDIHCDGDLEIDDHHTVEDCGITLGQAFAQALGDKKGLRRYGHFYAPLDESLSRVVVDLSGRPGLFMDIPFTRARIGSFDVDLFSEFFQGFVNHALMTLHIDNLKGKNSHHQIESVFKAFARALRMACEIDPRAAGSIASTKGSL.

Belongs to the imidazoleglycerol-phosphate dehydratase family.

The protein localises to the cytoplasm. It catalyses the reaction D-erythro-1-(imidazol-4-yl)glycerol 3-phosphate = 3-(imidazol-4-yl)-2-oxopropyl phosphate + H2O. It functions in the pathway amino-acid biosynthesis; L-histidine biosynthesis; L-histidine from 5-phospho-alpha-D-ribose 1-diphosphate: step 6/9. The sequence is that of Imidazoleglycerol-phosphate dehydratase from Acinetobacter baylyi (strain ATCC 33305 / BD413 / ADP1).